The primary structure comprises 384 residues: Dual-specificity RNA methyltransferase RlmN (384 aa).

Catalysis depends on Glu-105, which acts as the Proton acceptor. The Radical SAM core domain maps to 111–350 (EDDRATLCVS…TIVRKTRGDD (240 aa)). Residues Cys-118 and Cys-355 are joined by a disulfide bond. [4Fe-4S] cluster-binding residues include Cys-125, Cys-129, and Cys-132. S-adenosyl-L-methionine contacts are provided by residues 179–180 (GE), Ser-211, 233–235 (SLH), and Asn-312. Cys-355 functions as the S-methylcysteine intermediate in the catalytic mechanism.

Belongs to the radical SAM superfamily. RlmN family. The cofactor is [4Fe-4S] cluster.

The protein resides in the cytoplasm. It carries out the reaction adenosine(2503) in 23S rRNA + 2 reduced [2Fe-2S]-[ferredoxin] + 2 S-adenosyl-L-methionine = 2-methyladenosine(2503) in 23S rRNA + 5'-deoxyadenosine + L-methionine + 2 oxidized [2Fe-2S]-[ferredoxin] + S-adenosyl-L-homocysteine. It catalyses the reaction adenosine(37) in tRNA + 2 reduced [2Fe-2S]-[ferredoxin] + 2 S-adenosyl-L-methionine = 2-methyladenosine(37) in tRNA + 5'-deoxyadenosine + L-methionine + 2 oxidized [2Fe-2S]-[ferredoxin] + S-adenosyl-L-homocysteine. In terms of biological role, specifically methylates position 2 of adenine 2503 in 23S rRNA and position 2 of adenine 37 in tRNAs. m2A2503 modification seems to play a crucial role in the proofreading step occurring at the peptidyl transferase center and thus would serve to optimize ribosomal fidelity. This is Dual-specificity RNA methyltransferase RlmN from Shigella boydii serotype 18 (strain CDC 3083-94 / BS512).